The following is a 267-amino-acid chain: tRNA-cytidine(32) 2-sulfurtransferase 1 (267 aa).

The PP-loop motif motif lies at 42–47; the sequence is SGGKDS. Residues C117, C120, and C208 each coordinate [4Fe-4S] cluster.

This sequence belongs to the TtcA family. Homodimer. The cofactor is Mg(2+). [4Fe-4S] cluster serves as cofactor.

The protein resides in the cytoplasm. It carries out the reaction cytidine(32) in tRNA + S-sulfanyl-L-cysteinyl-[cysteine desulfurase] + AH2 + ATP = 2-thiocytidine(32) in tRNA + L-cysteinyl-[cysteine desulfurase] + A + AMP + diphosphate + H(+). It participates in tRNA modification. Catalyzes the ATP-dependent 2-thiolation of cytidine in position 32 of tRNA, to form 2-thiocytidine (s(2)C32). The sulfur atoms are provided by the cysteine/cysteine desulfurase (IscS) system. This Francisella tularensis subsp. tularensis (strain FSC 198) protein is tRNA-cytidine(32) 2-sulfurtransferase 1.